The following is a 419-amino-acid chain: Adenylosuccinate synthetase (419 aa).

GTP-binding positions include 11 to 17 (GDEGKGK) and 39 to 41 (GHS). Aspartate 12 (proton acceptor) is an active-site residue. Residues aspartate 12 and glycine 39 each coordinate Mg(2+). Residues 12-15 (DEGK), 37-40 (NAGH), threonine 129, arginine 143, asparagine 221, threonine 236, and arginine 296 each bind IMP. The Proton donor role is filled by histidine 40. Residue 292–298 (VSTGRKR) participates in substrate binding. GTP is bound by residues arginine 298, 324 to 326 (KLD), and 408 to 410 (GTG).

It belongs to the adenylosuccinate synthetase family. Homodimer. The cofactor is Mg(2+).

It localises to the cytoplasm. It catalyses the reaction IMP + L-aspartate + GTP = N(6)-(1,2-dicarboxyethyl)-AMP + GDP + phosphate + 2 H(+). It functions in the pathway purine metabolism; AMP biosynthesis via de novo pathway; AMP from IMP: step 1/2. Plays an important role in the de novo pathway and in the salvage pathway of purine nucleotide biosynthesis. Catalyzes the first committed step in the biosynthesis of AMP from IMP. The polypeptide is Adenylosuccinate synthetase (Chaetomium globosum (strain ATCC 6205 / CBS 148.51 / DSM 1962 / NBRC 6347 / NRRL 1970) (Soil fungus)).